Here is a 1361-residue protein sequence, read N- to C-terminus: Rho guanine nucleotide exchange factor 18 (1361 aa).

Disordered stretches follow at residues 33 to 88, 131 to 156, and 244 to 292; these read LQDL…SCSE, SGGG…SRSV, and DGAG…ARER. Positions 50 to 61 are enriched in basic and acidic residues; sequence PDSRPTGEEPGR. Positions 64–73 are enriched in polar residues; that stretch reads LFSSLAGSQD. Residues 74–88 are compositionally biased toward basic and acidic residues; it reads LSRRRSWERSRSCSE. 2 stretches are compositionally biased toward basic and acidic residues: residues 245–256 and 271–292; these read GAGKNEKSDKST and RQKE…ARER. The segment at 310 to 334 adopts a C2H2-type; degenerate zinc-finger fold; it reads SSCPLCGKPFLSSASLKEHPRGTLL. The interval 348–368 is disordered; that stretch reads TVSQKGGPQPTPSPAGPGTQL. Residues 447–644 form the DH domain; sequence KRQDVLYELM…KDIISQVDAK (198 aa). The region spanning 684–786 is the PH domain; it reads QLHLEGMLCW…WMAHIQRAVE (103 aa). 4 disordered regions span residues 893-980, 1143-1211, 1229-1264, and 1277-1361; these read ANGQ…DPRL, LKKQ…RLAK, AAVQ…SSAS, and MGKD…VIFF. A Phosphothreonine modification is found at Thr-912. Residue Ser-921 is modified to Phosphoserine. The stretch at 1038-1148 forms a coiled coil; it reads LEQERQRNFE…LLRRLKKQNT (111 aa). Over residues 1191 to 1211 the composition is skewed to basic and acidic residues; the sequence is YAERPEVARRDSAPTENRLAK. A compositionally biased stretch (polar residues) spans 1254–1264; the sequence is RGSQRWESSAS. Phosphoserine occurs at positions 1289 and 1291. 2 stretches are compositionally biased toward pro residues: residues 1300-1317 and 1334-1344; these read PAPP…PPAD and PGPPAPSPLPA. Basic and acidic residues predominate over residues 1349 to 1361; it reads AKEDASKEDVIFF.

As to quaternary structure, interacts with SEPT9; the interaction may inhibit GEF activity. Interacts with Gbetagamma subunits GNB1 and GNG2. Interacts with EPB41L4B. Interacts with PATJ (via C-terminus). As to expression, expressed in all tissues tested with highest expression in kidney and pancreas. Weakly or not expressed in liver, skeletal muscle and testis. Isoform 1: Expressed in eosinophils. Isoform 2: Expressed in eosinophils. Isoform 3: Expressed in eosinophils. Isoform 4: Not detected in eosinophils.

The protein resides in the cytoplasm. It is found in the cytoskeleton. The protein localises to the cell membrane. Its subcellular location is the apical cell membrane. In terms of biological role, acts as a guanine nucleotide exchange factor (GEF) for RhoA GTPases. Its activation induces formation of actin stress fibers. Also acts as a GEF for RAC1, inducing production of reactive oxygen species (ROS). Does not act as a GEF for CDC42. The G protein beta-gamma (Gbetagamma) subunits of heterotrimeric G proteins act as activators, explaining the integrated effects of LPA and other G-protein coupled receptor agonists on actin stress fiber formation, cell shape change and ROS production. Required for EPB41L4B-mediated regulation of the circumferential actomyosin belt in epithelial cells. The polypeptide is Rho guanine nucleotide exchange factor 18 (ARHGEF18) (Homo sapiens (Human)).